The primary structure comprises 150 residues: FCS-Like Zinc finger 15 (150 aa).

Over residues 12-28 (NNNNNNNNNNNNNNNKN) the composition is skewed to low complexity. Positions 12 to 31 (NNNNNNNNNNNNNNNKNPLS) are disordered. An FLZ-type zinc finger spans residues 67–111 (GFLEHCFLCRRKLLPAKDIYMYKGDRAFCSVECRSKQMIMDEEES). A disordered region spans residues 129 to 150 (SPATAPSRYRRDPRNQAGGFAY).

It belongs to the FLZ family. As to quaternary structure, interacts with KIN10 and KIN11 via its FLZ-type zinc finger domain. Interacts with KINB1 and KINB3 via its N-terminal part. Forms homodimer and heterodimer with FLZ1, FLZ2 and FLZ7 in vitro.

Its subcellular location is the cytoplasm. It localises to the P-body. May act as an adapter to facilitate the interaction of SnRK1 complex with effector proteins, conferring tissue- and stimulus-type specific differences in the SnRK1 regulation pathway. This Arabidopsis thaliana (Mouse-ear cress) protein is FCS-Like Zinc finger 15.